Consider the following 663-residue polypeptide: Polyunsaturated fatty acid lipoxygenase ALOX15 (663 aa).

The 114-residue stretch at 2 to 115 folds into the PLAT domain; sequence GVYRIRVSTG…ILNLPEGTGC (114 aa). Residues 116–663 form the Lipoxygenase domain; that stretch reads TVVEDSQGLF…PSLVENSVAI (548 aa). Fe cation is bound by residues His361, His366, His541, His545, and Ile663.

The protein belongs to the lipoxygenase family. In terms of assembly, interacts with PEBP1; in response to IL13/interleukin-13, prevents the interaction of PEBP1 with RAF1 to activate the ERK signaling cascade. Fe cation serves as cofactor. In terms of tissue distribution, found in pituitary and pineal glands as well as leukocytes, kidney, aorta, small intestine and cornea. Also expressed by resident peritoneal macrophages (at protein level).

The protein localises to the cytoplasm. It localises to the cytosol. Its subcellular location is the cell membrane. It is found in the lipid droplet. The enzyme catalyses (5Z,8Z,11Z,14Z)-eicosatetraenoate + O2 = (12S)-hydroperoxy-(5Z,8Z,10E,14Z)-eicosatetraenoate. It carries out the reaction (5Z,8Z,11Z,14Z)-eicosatetraenoate + O2 = (15S)-hydroperoxy-(5Z,8Z,11Z,13E)-eicosatetraenoate. The catalysed reaction is (9Z,12Z)-octadecadienoate + O2 = (13S)-hydroperoxy-(9Z,11E)-octadecadienoate. It catalyses the reaction (5Z,8Z,11Z,14Z)-eicosatetraenoate + 2 O2 = (14R,15S)-dihydroperoxy-(5Z,8Z,10E,12E)-eicosatetraenoate. The enzyme catalyses (5Z,8Z,11Z,14Z)-eicosatetraenoate + 2 O2 = (8S,15S)-dihydroperoxy-(5Z,9E,11Z,13E)-eicosatetraenoate. It carries out the reaction (14S,15R)-epoxy-(5Z,8Z,11Z)-eicosatrienoate + O2 = (8S)-hydroperoxy-(14S,15R)-epoxy-(5Z,9E,11Z)-eicosatrienoate. The catalysed reaction is (14S,15R)-epoxy-(5Z,8Z,11Z)-eicosatrienoate + O2 = (12S)-hydroperoxy-(14S,15R)-epoxy-(5Z,8Z,10E)-eicosatrienoate. It catalyses the reaction (14R,15S)-epoxy-(5Z,8Z,11Z)-eicosatrienoate + O2 = (5S)-hydroperoxy-(14R,15S)-epoxy-(6E,8Z,11Z)-eicosatrienoate. The enzyme catalyses (14R,15S)-epoxy-(5Z,8Z,11Z)-eicosatrienoate + O2 = (12S)-hydroperoxy-(14R,15S)-epoxy-(5Z,8Z,10E)-eicosatrienoate. It carries out the reaction (15R)-hydroperoxy-(5Z,8Z,11Z,13E)-eicosatetraenoate = 15-oxo-(5Z,8Z,11Z,13E)-eicosatetraenoate + H2O. The catalysed reaction is (15S)-hydroperoxy-(5Z,8Z,11Z,13E)-eicosatetraenoate = (14S,15S)-epoxy-(5Z,8Z,10E,12E)-eicosatetraenoate + H2O. It catalyses the reaction (12S)-hydroperoxy-(5Z,8Z,10E,14Z)-eicosatetraenoate = (8S)-hydroxy-(11S,12S)-epoxy-(5Z,9E,14Z)-eicosatrienoate. The enzyme catalyses (4Z,7Z,10Z,13Z,16Z)-docosapentaenoate + O2 = 14-hydroperoxy-(4Z,7Z,10Z,12E,16Z)-docosapentaenoate. It carries out the reaction (7Z,10Z,13Z,16Z,19Z)-docosapentaenoate + O2 = 14-hydroperoxy-(7Z,10Z,12E,16Z,19Z)-docosapentaenoate. The catalysed reaction is (4Z,7Z,10Z,13Z,16Z,19Z)-docosahexaenoate + O2 = (14S)-hydroperoxy-(4Z,7Z,10Z,12E,16Z,19Z)-docosahexaenoate. It catalyses the reaction (4Z,7Z,10Z,13Z,16Z,19Z)-docosahexaenoate + O2 = (17S)-hydroperoxy-(4Z,7Z,10Z,13Z,15E,19Z)-docosahexaenoate. The enzyme catalyses (7S)-hydroperoxy-(4Z,8E,10Z,13Z,16Z,19Z)-docosahexaenoate + O2 = (7S,14S)-dihydroperoxy-(4Z,8E,10Z,12E,16Z,19Z)-docosahexaenoate. It carries out the reaction (7S)-hydroperoxy-(4Z,8E,10Z,13Z,16Z,19Z)-docosahexaenoate + O2 = (7S,17S)-dihydroperoxy-(4Z,8E,10Z,13Z,15E,19Z)-docosahexaenoate. The catalysed reaction is (4Z,7Z,10Z,13Z,16Z,19Z)-docosahexaenoate + O2 = (11S)-hydroperoxy-(4Z,7Z,9E,13Z,16Z,19Z)-docosahexaenoate. It catalyses the reaction N-(5Z,8Z,11Z,14Z)-eicosatetraenoyl-taurine + O2 = N-(12S)-hydroperoxy-(5Z,8Z,10E,14Z)-eicosatetraenoyl-taurine. The enzyme catalyses N-(5Z,8Z,11Z,14Z)-eicosatetraenoyl-gamma-aminobutanoate + O2 = N-(12S)-hydroperoxy-(5Z,8Z,10E,14Z)-eicosatetraenoyl-gamma-aminobutanoate. It carries out the reaction N-(5Z,8Z,11Z,14Z)-eicosatetraenoyl-glycine + O2 = N-(12S)-hydroperoxy-(5Z,8Z,10E,14Z)-eicosatetraenoyl-glycine. The catalysed reaction is N-(5Z,8Z,11Z,14Z)-eicosatetraenoyl-L-alanine + O2 = N-(12S)-hydroperoxy-(5Z,8Z,10E,14Z)-eicosatetraenoyl-alanine. It catalyses the reaction N-(5Z,8Z,11Z,14Z)-eicosatetraenoyl-taurine + O2 = N-(15S)-hydroperoxy-(5Z,8Z,11Z,13E)-eicosatetraenoyl-taurine. The enzyme catalyses N-(5Z,8Z,11Z,14Z)-eicosatetraenoyl-gamma-aminobutanoate + O2 = N-(15S)-hydroperoxy-(5Z,8Z,11Z,13E)-eicosatetraenoyl-gamma-aminobutanoate. It carries out the reaction N-(5Z,8Z,11Z,14Z)-eicosatetraenoyl-glycine + O2 = N-(15S)-hydroperoxy-(5Z,8Z,11Z,13E)-eicosatetraenoyl-glycine. The catalysed reaction is N-(5Z,8Z,11Z,14Z)-eicosatetraenoyl-L-alanine + O2 = N-(15S)-hydroperoxy-(5Z,8Z,11Z,13E)-eicosatetraenoyl-alanine. Its pathway is lipid metabolism; hydroperoxy eicosatetraenoic acid biosynthesis. Functionally, non-heme iron-containing dioxygenase that catalyzes the stereo-specific peroxidation of free and esterified polyunsaturated fatty acids generating a spectrum of bioactive lipid mediators. It inserts peroxyl groups at C12 or C15 of arachidonate ((5Z,8Z,11Z,14Z)-eicosatetraenoate) producing both 12-hydroperoxyeicosatetraenoate/12-HPETE and 15-hydroperoxyeicosatetraenoate/15-HPETE. It may then act on 12-HPETE to produce hepoxilins, which may show pro-inflammatory properties. Can also peroxidize linoleate ((9Z,12Z)-octadecadienoate) to 13-hydroperoxyoctadecadienoate. May participate in the sequential oxidations of DHA ((4Z,7Z,10Z,13Z,16Z,19Z)-docosahexaenoate) to generate specialized pro-resolving mediators (SPMs)like resolvin D5 ((7S,17S)-diHPDHA) and (7S,14S)-diHPDHA, that actively down-regulate the immune response and have anti-aggregation properties with platelets. Can convert epoxy fatty acids to hydroperoxy-epoxides derivatives followed by an intramolecular nucleophilic substitution leading to the formation of monocyclic endoperoxides. Plays an important role during the maintenance of self-tolerance by peroxidizing membrane-bound phosphatidylethanolamine which can then signal the sorting process for clearance of apoptotic cells during inflammation and prevent an autoimmune response. In addition to its role in the immune and inflammatory responses, this enzyme may play a role in epithelial wound healing in the cornea through production of lipoxin A4 (LXA(4)) and docosahexaenoic acid-derived neuroprotectin D1 (NPD1; 10R,17S-HDHA), both lipid autacoids exhibit anti-inflammatory and neuroprotective properties. Furthermore, it may regulate actin polymerization which is crucial for several biological processes such as the phagocytosis of apoptotic cells. It is also implicated in the generation of endogenous ligands for peroxisome proliferator activated receptor (PPAR-gamma), hence modulating macrophage development and function. It may also exert a negative effect on skeletal development by regulating bone mass through this pathway. As well as participates in ER stress and downstream inflammation in adipocytes, pancreatic islets, and liver. Finally, it is also involved in the cellular response to IL13/interleukin-13. In Mus musculus (Mouse), this protein is Polyunsaturated fatty acid lipoxygenase ALOX15.